The sequence spans 130 residues: Annexin A1 (130 aa).

Q19 participates in a covalent cross-link: Isoglutamyl lysine isopeptide (Gln-Lys) (interchain with K-?). Phosphoserine; by PKC is present on S24. Annexin repeat units follow at residues 37–108 (FDPS…ALLK) and 109–130 (TPAQ…TDRR). Ca(2+) contacts are provided by G54, V55, E57, K92, L95, E100, M122, G124, G126, T127, and R130.

Belongs to the annexin family.

It localises to the nucleus. The protein resides in the cytoplasm. It is found in the cell projection. The protein localises to the cilium. Its subcellular location is the basolateral cell membrane. It localises to the lateral cell membrane. The protein resides in the cell membrane. It is found in the apical cell membrane. The protein localises to the membrane. Its subcellular location is the early endosome. It localises to the cytoplasmic vesicle membrane. The protein resides in the endosome membrane. It is found in the secreted. The protein localises to the extracellular space. Its subcellular location is the extracellular exosome. It localises to the cytoplasmic vesicle. The protein resides in the secretory vesicle lumen. It is found in the phagocytic cup. In terms of biological role, plays important roles in the innate immune response as effector of glucocorticoid-mediated responses and regulator of the inflammatory process. Has anti-inflammatory activity. Plays a role in glucocorticoid-mediated down-regulation of the early phase of the inflammatory response. Promotes resolution of inflammation and wound healing. Functions at least in part by activating the formyl peptide receptors and downstream signaling cascades. Promotes chemotaxis of granulocytes and monocytes via activation of the formyl peptide receptors. Contributes to the adaptive immune response by enhancing signaling cascades that are triggered by T-cell activation, regulates differentiation and proliferation of activated T-cells. Promotes the differentiation of T-cells into Th1 cells and negatively regulates differentiation into Th2 cells. Has no effect on unstimulated T-cells. Promotes rearrangement of the actin cytoskeleton, cell polarization and cell migration. Negatively regulates hormone exocytosis via activation of the formyl peptide receptors and reorganization of the actin cytoskeleton. Has high affinity for Ca(2+) and can bind up to eight Ca(2+) ions. Displays Ca(2+)-dependent binding to phospholipid membranes. Plays a role in the formation of phagocytic cups and phagosomes. Plays a role in phagocytosis by mediating the Ca(2+)-dependent interaction between phagosomes and the actin cytoskeleton. The chain is Annexin A1 (ANXA1) from Gallus gallus (Chicken).